The following is a 44-amino-acid chain: Brevinin-1PLa (44 aa).

A propeptide spanning residues 1–18 is cleaved from the precursor; sequence NAEEERRDEPDETDVEVE. Cys38 and Cys44 are disulfide-bonded.

As to expression, expressed by the skin glands.

The protein resides in the secreted. Its function is as follows. Antimicrobial peptide. This chain is Brevinin-1PLa, found in Lithobates palustris (Pickerel frog).